The primary structure comprises 375 residues: MTPILFVDRDGTLITEPADFQIDAYEKLRFVDGVIPAMLKLRDAGYQFVIVSNQDGLGSESYPQASFDGPNNLMLQIFASQGIVFREVLIDCSWPADNAPTRKPGVGLMVPYLQDRTIDWSRSAMVGDRITDIQFAQNLNIRGFQLRTEQFGGDWDWAGIAHELADAPRRAVVQRNTKETRIRVELDLDRVAEPHTATGLPFFDHMLEQIGKHGGFALDIRAEGDLHIDEHHTIEDTGLALGQALREALGDKRGIGRYGFDPDDSPWRVAGDTTQHGFTLPMDETIASAALDFSGRPYFVFDGDFKRERVGDMPTELVPHFFRSVCDASGLNLHLHVRGENDHHKVEGCFKALARALRQAIRREGTALPSTKGAL.

The interval 1 to 168 (MTPILFVDRD…GIAHELADAP (168 aa)) is histidinol-phosphatase. Aspartate 8 (nucleophile) is an active-site residue. Mg(2+) contacts are provided by aspartate 8, aspartate 10, and aspartate 128. The Proton donor role is filled by aspartate 10. The tract at residues 169 to 375 (RRAVVQRNTK…TALPSTKGAL (207 aa)) is imidazoleglycerol-phosphate dehydratase.

It in the N-terminal section; belongs to the histidinol-phosphatase family. The protein in the C-terminal section; belongs to the imidazoleglycerol-phosphate dehydratase family. Mg(2+) is required as a cofactor.

Its subcellular location is the cytoplasm. It catalyses the reaction D-erythro-1-(imidazol-4-yl)glycerol 3-phosphate = 3-(imidazol-4-yl)-2-oxopropyl phosphate + H2O. The catalysed reaction is L-histidinol phosphate + H2O = L-histidinol + phosphate. Its pathway is amino-acid biosynthesis; L-histidine biosynthesis; L-histidine from 5-phospho-alpha-D-ribose 1-diphosphate: step 6/9. It participates in amino-acid biosynthesis; L-histidine biosynthesis; L-histidine from 5-phospho-alpha-D-ribose 1-diphosphate: step 8/9. In Xanthomonas campestris pv. campestris (strain 8004), this protein is Histidine biosynthesis bifunctional protein HisB.